The primary structure comprises 89 residues: Ubiquinol-cytochrome-c reductase complex assembly factor 3 (89 aa).

Residues 1 to 7 (MEAARKA) lie on the Mitochondrial matrix side of the membrane. The helical transmembrane segment at 8-28 (LAVVAVLGAGGGVGSILFALV) threads the bilayer. The mediates lipid-binding stretch occupies residues 23–80 (ILFALVTPGELQKQLMLQEMPERDSRRRDEAVRTKELVMATLKDAAATKENVAWRRNW). The Mitochondrial intermembrane segment spans residues 29-89 (TPGELQKQLM…WTVRGDGRSA (61 aa)).

The protein belongs to the UQCC3 family. In terms of assembly, associates with the ubiquinol-cytochrome c reductase complex (mitochondrial respiratory chain complex III(CIII) or cytochrome b-c1 complex). Interacts with UQCC1. Forms a complex, named COMC, composed of UQCC1, UQCC2; UQCC3 and UQCC4; mediates MT-CYB hemylation and association with the first nuclear-encoded complex III subunit UQCRQ. In terms of processing, probably cleaved by OMA1 under mitochondrial stress conditions.

The protein localises to the mitochondrion inner membrane. Functionally, required for the assembly of the ubiquinol-cytochrome c reductase complex (mitochondrial respiratory chain complex III or cytochrome b-c1 complex), mediating cytochrome b recruitment and probably stabilization within the complex. Thereby, plays an important role in ATP production by mitochondria. Cardiolipin-binding protein, it may also control the cardiolipin composition of mitochondria membranes and their morphology. This is Ubiquinol-cytochrome-c reductase complex assembly factor 3 from Rattus norvegicus (Rat).